The primary structure comprises 115 residues: MGSLKLVCAVLLCMMVAAPVARASLTCPQIKGNLTPCVLYLKNGGVLPPSCCKGVRAVNDASRTTSDRQSACNCLKDTAKGIAGLNPNLAAGLPGKCGVNIPYKISPSTNCNNVK.

The first 23 residues, 1–23, serve as a signal peptide directing secretion; it reads MGSLKLVCAVLLCMMVAAPVARA. 4 disulfide bridges follow: Cys27–Cys74, Cys37–Cys51, Cys52–Cys97, and Cys72–Cys111.

Belongs to the plant LTP family. As to quaternary structure, monomer. Expressed in seed (at protein level). Expressed in seed.

In terms of biological role, plant non-specific lipid-transfer proteins transfer phospholipids as well as galactolipids across membranes. May play a role in wax or cutin deposition in the cell walls of expanding epidermal cells and certain secretory tissues. The protein is Non-specific lipid-transfer protein Cor a 8.0101 of Corylus avellana (European hazel).